A 180-amino-acid polypeptide reads, in one-letter code: Beta-lactoglobulin-1/B (180 aa).

The first 18 residues, 1-18 (MKCLLLALGLALACGVQA), serve as a signal peptide directing secretion. 3 disulfide bridges follow: Cys-84/Cys-178, Cys-124/Cys-137, and Cys-124/Cys-139.

It belongs to the calycin superfamily. Lipocalin family. Under physiological conditions beta-lactoglobulin exists as an equilibrium mixture of monomeric and dimeric forms. Alternate disulfide bonds occur in equal amounts.

It is found in the secreted. Lactoglobulin is the primary component of whey, it binds retinol and is probably involved in the transport of that molecule. In Ovis aries (Sheep), this protein is Beta-lactoglobulin-1/B.